The primary structure comprises 134 residues: ATP synthase epsilon chain, plastid (134 aa).

It belongs to the ATPase epsilon chain family. In terms of assembly, F-type ATPases have 2 components, CF(1) - the catalytic core - and CF(0) - the membrane proton channel. CF(1) has five subunits: alpha(3), beta(3), gamma(1), delta(1), epsilon(1). CF(0) has three main subunits: a, b and c.

It is found in the plastid membrane. In terms of biological role, produces ATP from ADP in the presence of a proton gradient across the membrane. This chain is ATP synthase epsilon chain, plastid, found in Prototheca wickerhamii.